The chain runs to 291 residues: Ribosomal protein L11 methyltransferase (291 aa).

4 residues coordinate S-adenosyl-L-methionine: Thr-136, Gly-159, Asp-181, and Asn-228.

Belongs to the methyltransferase superfamily. PrmA family.

It localises to the cytoplasm. The catalysed reaction is L-lysyl-[protein] + 3 S-adenosyl-L-methionine = N(6),N(6),N(6)-trimethyl-L-lysyl-[protein] + 3 S-adenosyl-L-homocysteine + 3 H(+). In terms of biological role, methylates ribosomal protein L11. The protein is Ribosomal protein L11 methyltransferase of Sinorhizobium fredii (strain NBRC 101917 / NGR234).